Consider the following 272-residue polypeptide: S-adenosylmethionine decarboxylase proenzyme (272 aa).

S122 serves as the catalytic Schiff-base intermediate with substrate; via pyruvic acid. At S122 the chain carries Pyruvic acid (Ser); by autocatalysis. The Proton acceptor; for processing activity role is filled by H127. C150 (proton donor; for catalytic activity) is an active-site residue.

This sequence belongs to the prokaryotic AdoMetDC family. Type 2 subfamily. In terms of assembly, heterooctamer of four alpha and four beta chains arranged as a tetramer of alpha/beta heterodimers. It depends on pyruvate as a cofactor. Is synthesized initially as an inactive proenzyme. Formation of the active enzyme involves a self-maturation process in which the active site pyruvoyl group is generated from an internal serine residue via an autocatalytic post-translational modification. Two non-identical subunits are generated from the proenzyme in this reaction, and the pyruvate is formed at the N-terminus of the alpha chain, which is derived from the carboxyl end of the proenzyme. The post-translation cleavage follows an unusual pathway, termed non-hydrolytic serinolysis, in which the side chain hydroxyl group of the serine supplies its oxygen atom to form the C-terminus of the beta chain, while the remainder of the serine residue undergoes an oxidative deamination to produce ammonia and the pyruvoyl group blocking the N-terminus of the alpha chain.

The enzyme catalyses S-adenosyl-L-methionine + H(+) = S-adenosyl 3-(methylsulfanyl)propylamine + CO2. It participates in amine and polyamine biosynthesis; S-adenosylmethioninamine biosynthesis; S-adenosylmethioninamine from S-adenosyl-L-methionine: step 1/1. Its function is as follows. Catalyzes the decarboxylation of S-adenosylmethionine to S-adenosylmethioninamine (dcAdoMet), the propylamine donor required for the synthesis of the polyamines spermine and spermidine from the diamine putrescine. The polypeptide is S-adenosylmethionine decarboxylase proenzyme (Clostridium botulinum (strain Alaska E43 / Type E3)).